The chain runs to 372 residues: Citrate/2-methylcitrate synthase (372 aa).

Histidine 188 contributes to the substrate binding site. Residue histidine 223 is part of the active site. 256–260 (KIMGF) lines the CoA pocket. The active site involves histidine 262. Residue arginine 272 participates in substrate binding. Aspartate 314 is an active-site residue. The substrate site is built by arginine 339 and arginine 358.

The protein belongs to the citrate synthase family.

It carries out the reaction propanoyl-CoA + oxaloacetate + H2O = 2-methylcitrate + CoA + H(+). It catalyses the reaction oxaloacetate + acetyl-CoA + H2O = citrate + CoA + H(+). Its pathway is carbohydrate metabolism; tricarboxylic acid cycle; isocitrate from oxaloacetate: step 1/2. Functionally, involved in both the tricarboxylic acid (TCA) and methylcitric acid cycles. Has both 2-methylcitrate synthase and citrate synthase activities. Catalyzes the condensation of propionyl-CoA and oxaloacetate to yield 2-methylcitrate (2-MC) and CoA, and the condensation of acetyl-CoA and oxaloacetate to yield citrate and CoA. Has 2.3-fold higher activity as a 2-methylcitrate synthase. Catalyzes the formation of either (2S,3R)- or (2R,3S)-2-methylcitrate. This is Citrate/2-methylcitrate synthase from Bacillus subtilis (strain 168).